The primary structure comprises 101 residues: U-scoloptoxin(10)-Sm2a (101 aa).

An N-terminal signal peptide occupies residues 1 to 23; it reads MNKSMIILCAVLFLTYIIEENEA.

The protein belongs to the scoloptoxin-10 family. Post-translationally, contains 3 disulfide bonds. As to expression, expressed by the venom gland.

It is found in the secreted. The protein is U-scoloptoxin(10)-Sm2a of Scolopendra morsitans (Tanzanian blue ringleg centipede).